Consider the following 240-residue polypeptide: MPFDPAASPLSPSQARVLATLMEKARTVPDSYPMSLNGLLTGCNQKTSRDPVMALSEAQVQEALAALERLALVFENSGYRSPRWEHNFQRGAGVPEQSAVLLGLLMLRGPQTAAELRTNAERWYRFADISSVEAFLDELQQRSADKGGPLAVPLPRSPGTREQRWAHLLCGPVDAGRSNAGVEPVPAGVETLQERIGTLESELASLRATVQWLCQELGITPAPASMPQPGLPAGNGSPGS.

This sequence belongs to the UPF0502 family.

The protein is UPF0502 protein Veis_2102 of Verminephrobacter eiseniae (strain EF01-2).